Here is a 412-residue protein sequence, read N- to C-terminus: Gamma-glutamyl phosphate reductase (412 aa).

The protein belongs to the gamma-glutamyl phosphate reductase family.

It localises to the cytoplasm. The enzyme catalyses L-glutamate 5-semialdehyde + phosphate + NADP(+) = L-glutamyl 5-phosphate + NADPH + H(+). It participates in amino-acid biosynthesis; L-proline biosynthesis; L-glutamate 5-semialdehyde from L-glutamate: step 2/2. In terms of biological role, catalyzes the NADPH-dependent reduction of L-glutamate 5-phosphate into L-glutamate 5-semialdehyde and phosphate. The product spontaneously undergoes cyclization to form 1-pyrroline-5-carboxylate. This chain is Gamma-glutamyl phosphate reductase, found in Aliarcobacter butzleri (strain RM4018) (Arcobacter butzleri).